A 285-amino-acid chain; its full sequence is 2-dehydro-3-deoxyphosphooctonate aldolase (285 aa).

It belongs to the KdsA family.

The protein localises to the cytoplasm. The catalysed reaction is D-arabinose 5-phosphate + phosphoenolpyruvate + H2O = 3-deoxy-alpha-D-manno-2-octulosonate-8-phosphate + phosphate. Its pathway is carbohydrate biosynthesis; 3-deoxy-D-manno-octulosonate biosynthesis; 3-deoxy-D-manno-octulosonate from D-ribulose 5-phosphate: step 2/3. It participates in bacterial outer membrane biogenesis; lipopolysaccharide biosynthesis. The protein is 2-dehydro-3-deoxyphosphooctonate aldolase of Verminephrobacter eiseniae (strain EF01-2).